The primary structure comprises 480 residues: Adenosylhomocysteinase (480 aa).

3 residues coordinate substrate: Thr63, Asp142, and Glu203. An NAD(+)-binding site is contributed by 204–206 (TTT). The substrate site is built by Lys233 and Asp237. NAD(+)-binding positions include Asn238, 267–272 (GYGDVG), Glu290, Asn325, 346–348 (IGH), and Asn394.

This sequence belongs to the adenosylhomocysteinase family. The cofactor is NAD(+).

It is found in the cytoplasm. It carries out the reaction S-adenosyl-L-homocysteine + H2O = L-homocysteine + adenosine. It functions in the pathway amino-acid biosynthesis; L-homocysteine biosynthesis; L-homocysteine from S-adenosyl-L-homocysteine: step 1/1. May play a key role in the regulation of the intracellular concentration of adenosylhomocysteine. The polypeptide is Adenosylhomocysteinase (Xanthomonas campestris pv. campestris (strain 8004)).